Consider the following 265-residue polypeptide: Bidirectional sugar transporter NEC1 (265 aa).

At methionine 1–aspartate 8 the chain is on the extracellular side. The helical transmembrane segment at leucine 9 to valine 29 threads the bilayer. Residues phenylalanine 11–lysine 97 enclose the MtN3/slv 1 domain. The Cytoplasmic segment spans residues proline 30–tyrosine 44. The chain crosses the membrane as a helical span at residues glutamine 45–leucine 65. The Extracellular segment spans residues arginine 66–leucine 71. A helical transmembrane segment spans residues isoleucine 72–phenylalanine 92. The Cytoplasmic segment spans residues tyrosine 93–glycine 103. Residues tryptophan 104–alanine 124 traverse the membrane as a helical segment. Topologically, residues glutamate 125 to valine 130 are extracellular. Residues methionine 131–isoleucine 151 traverse the membrane as a helical segment. The MtN3/slv 2 domain occupies isoleucine 132–lysine 216. The Cytoplasmic segment spans residues methionine 152 to methionine 164. A helical membrane pass occupies residues proline 165 to phenylalanine 185. Over lysine 186 to tyrosine 190 the chain is Extracellular. Residues isoleucine 191–valine 211 form a helical membrane-spanning segment. Residues tyrosine 212–lysine 265 are Cytoplasmic-facing.

It belongs to the SWEET sugar transporter family. In terms of assembly, forms homooligomers and/or heterooligomers. Highly expressed in nectary tissue and weakly in the stamen, especially in stomium cells and in the upper part of the filaments.

It localises to the cell membrane. Mediates both low-affinity uptake and efflux of sugar across the plasma membrane. Promotes the formation of phloem bundles in mid-veins. Probably involved in the development of stomium cells that control anther opening time. Required for pollen viability. In Petunia hybrida (Petunia), this protein is Bidirectional sugar transporter NEC1 (NEC1).